Here is a 318-residue protein sequence, read N- to C-terminus: Thymidylate synthase (318 aa).

DUMP is bound by residues Arg25 and 180–181 (RR). Residue Cys200 is the Nucleophile of the active site. Residues 220 to 223 (RSGD), Asn231, and 261 to 263 (HIY) each bind dUMP. Position 223 (Asp223) interacts with (6R)-5,10-methylene-5,6,7,8-tetrahydrofolate. Position 317 (Ala317) interacts with (6R)-5,10-methylene-5,6,7,8-tetrahydrofolate.

It belongs to the thymidylate synthase family. Bacterial-type ThyA subfamily. Homodimer.

It localises to the cytoplasm. It carries out the reaction dUMP + (6R)-5,10-methylene-5,6,7,8-tetrahydrofolate = 7,8-dihydrofolate + dTMP. It participates in pyrimidine metabolism; dTTP biosynthesis. Functionally, catalyzes the reductive methylation of 2'-deoxyuridine-5'-monophosphate (dUMP) to 2'-deoxythymidine-5'-monophosphate (dTMP) while utilizing 5,10-methylenetetrahydrofolate (mTHF) as the methyl donor and reductant in the reaction, yielding dihydrofolate (DHF) as a by-product. This enzymatic reaction provides an intracellular de novo source of dTMP, an essential precursor for DNA biosynthesis. This chain is Thymidylate synthase, found in Bacillus cytotoxicus (strain DSM 22905 / CIP 110041 / 391-98 / NVH 391-98).